The chain runs to 67 residues: Preprofallaxidin-4 (67 aa).

An N-terminal signal peptide occupies residues 1-22 (MASLKKFLFLVLFLGMVSLSIC). The propeptide occupies 23-46 (DKEKREGENEEEEEEHEEESEEKR). The interval 24–48 (KEKREGENEEEEEEHEEESEEKRGL) is disordered. Acidic residues predominate over residues 30 to 42 (ENEEEEEEHEEES).

This sequence belongs to the frog skin active peptide (FSAP) family. Dermaseptin subfamily. In terms of tissue distribution, expressed by the skin glands.

Its subcellular location is the secreted. The sequence is that of Preprofallaxidin-4 from Litoria fallax (Eastern dwarf tree frog).